Reading from the N-terminus, the 738-residue chain is MGLGLLASRALRSSRIIRNSTRTIVSTPELKNADAAAAAAAADAPSDLPKRHPVGGARVHLPNPEDVIEVFVDGYPVKIPKGMTVLQACEIAGVDIPRFCYHSRLSIAGNCRMCLVEVEKSPKPVASCAMPALPGMKIKTDTPIAKKAREGVMEFLLMNHPLDCPICDQGGECDLQDQSMAFGSDRGRFTEMKRSVVDKNLGPLVKTVMTRCIQCTRCVRFASEVAGVEDLGMLGRGSGEEIGTYVEKLMTSELSGNVIDICPVGALTSKPFAFKARNWELKGTESIDVTDAVGSNIRIDSRGPEVMRVVPRLNEDINEEWISDKTRFFYDGLKRQRLNDPMIRGADGRFQAVSWRDALAIVAEVMHQIKPEEIVGVAGKLSDAESMMALKDLLNKMGSNNIFCEGNGMHPNADLRSGYIMNTSISGLEKADAFLLVGTQPRVEAAMVNARIHKTVKATNAKVGYVGPAADFNYDHEHLGTDPQTLVEIAEGRHPFSSALKNAKNPVIIVGAGVFDRDDKDAVFAAVDTIAKNNNVVRPDWNGLNVLLLNAAQVAALDLGLVPESDKCIESAKFVYLMGADDVNLDKLPDDAFVVYQGHHGDRGVYRANVILPASAFTEKEGIYENTEGCAQITLPAVPTVGDARDDWKIVRALSEVAGVGLPYDSLGAIRSRIKTVAPNLLEVDERQPATFSTSLRPEVSQKVSATPFTPAVENFYMTDAITRASKIMAQCSALLKK.

The transit peptide at 1 to 27 directs the protein to the mitochondrion; that stretch reads MGLGLLASRALRSSRIIRNSTRTIVST. Positions 66-144 constitute a 2Fe-2S ferredoxin-type domain; it reads DVIEVFVDGY…GMKIKTDTPI (79 aa). [2Fe-2S] cluster contacts are provided by C100, C111, C114, and C128. Positions 144 to 183 constitute a 4Fe-4S His(Cys)3-ligated-type domain; it reads IAKKAREGVMEFLLMNHPLDCPICDQGGECDLQDQSMAFG. H160, C164, C167, C173, C212, C215, C218, and C262 together coordinate [4Fe-4S] cluster. A 4Fe-4S Mo/W bis-MGD-type domain is found at 281-337; it reads LKGTESIDVTDAVGSNIRIDSRGPEVMRVVPRLNEDINEEWISDKTRFFYDGLKRQR.

This sequence belongs to the complex I 75 kDa subunit family. As to quaternary structure, complex I is composed of about 45 different subunits. This is a component of the iron-sulfur (IP) fragment of the enzyme. [2Fe-2S] cluster serves as cofactor. The cofactor is [4Fe-4S] cluster.

The protein resides in the mitochondrion inner membrane. It carries out the reaction a ubiquinone + NADH + 5 H(+)(in) = a ubiquinol + NAD(+) + 4 H(+)(out). Core subunit of the mitochondrial membrane respiratory chain NADH dehydrogenase (Complex I) that is believed to belong to the minimal assembly required for catalysis. Complex I functions in the transfer of electrons from NADH to the respiratory chain. The immediate electron acceptor for the enzyme is believed to be ubiquinone. This is the largest subunit of complex I and it is a component of the iron-sulfur (IP) fragment of the enzyme. It may form part of the active site crevice where NADH is oxidized. The chain is NADH dehydrogenase [ubiquinone] iron-sulfur protein 1, mitochondrial from Solanum tuberosum (Potato).